Consider the following 286-residue polypeptide: Nucleotide-binding protein HCH_05324 (286 aa).

Residue 8–15 (GRSGSGKS) coordinates ATP. A GTP-binding site is contributed by 60 to 63 (DARN).

It belongs to the RapZ-like family.

Its function is as follows. Displays ATPase and GTPase activities. The protein is Nucleotide-binding protein HCH_05324 of Hahella chejuensis (strain KCTC 2396).